The chain runs to 128 residues: Small ribosomal subunit protein uS11 (128 aa).

Belongs to the universal ribosomal protein uS11 family. Part of the 30S ribosomal subunit. Interacts with proteins S7 and S18. Binds to IF-3.

In terms of biological role, located on the platform of the 30S subunit, it bridges several disparate RNA helices of the 16S rRNA. Forms part of the Shine-Dalgarno cleft in the 70S ribosome. This is Small ribosomal subunit protein uS11 from Onion yellows phytoplasma (strain OY-M).